The primary structure comprises 2897 residues: Chromodomain-helicase-DNA-binding protein 9 (2897 aa).

Residues 173-201 (QCTSLRSQQNRNNLNPGQNSLSQSKNFMN) are compositionally biased toward polar residues. 3 disordered regions span residues 173–265 (QCTS…CSVS), 482–525 (QRQP…KQEK), and 537–671 (AKER…SAPL). A Glycyl lysine isopeptide (Lys-Gly) (interchain with G-Cter in SUMO2) cross-link involves residue lysine 197. Low complexity predominate over residues 220–235 (SNSQQSISMQQFSQTS). 2 stretches are compositionally biased toward polar residues: residues 247–260 (HQEG…PNMT) and 484–506 (QPPS…TQVR). N6-acetyllysine is present on lysine 499. Residues 508-525 (MSEKKQRKKVESESKQEK) are compositionally biased toward basic and acidic residues. Phosphoserine is present on serine 550. Basic and acidic residues predominate over residues 573 to 593 (KPKDKDSKKTKTCSKLKEKTK). Lysine 596 participates in a covalent cross-link: Glycyl lysine isopeptide (Lys-Gly) (interchain with G-Cter in SUMO2). Serine 611 carries the post-translational modification Phosphoserine. The span at 634–644 (RRSNRQIKRKK) shows a compositional bias: basic residues. Residues 645–660 (YAEDIEGKQSEEEVKG) show a composition bias toward basic and acidic residues. Chromo domains lie at 690–761 (AIVD…HFFA) and 773–839 (VEVD…RLDR). An LXXLL motif 1 motif is present at residues 868 to 872 (LNWLL). One can recognise a Helicase ATP-binding domain in the interval 872-1046 (LFNWYNRRNC…FSLLHFLEPL (175 aa)). 885 to 892 (DEMGLGKT) provides a ligand contact to ATP. Positions 997-1000 (DEAH) match the DEAH box motif. Positions 1036-1040 (LFSLL) match the LXXLL motif 2 motif. The Helicase C-terminal domain maps to 1186-1337 (LIDKLLPKMK…KAVLQSMSGR (152 aa)). The segment at 1461-1484 (KDELAELSEAESEGDEKPKLRRPC) is disordered. Residues 1465–1474 (AELSEAESEG) are compositionally biased toward acidic residues. Serine 1468 and serine 1472 each carry phosphoserine. Over residues 1475 to 1484 (DEKPKLRRPC) the composition is skewed to basic and acidic residues. Glycyl lysine isopeptide (Lys-Gly) (interchain with G-Cter in SUMO2) cross-links involve residues lysine 1588, lysine 1738, and lysine 1903. Serine 2026 is subject to Phosphoserine. Positions 2031–2035 (LPRLL) match the LXXLL motif 3 motif. Lysine 2038 participates in a covalent cross-link: Glycyl lysine isopeptide (Lys-Gly) (interchain with G-Cter in SUMO2). Disordered regions lie at residues 2050 to 2238 (ENLK…QMNN) and 2305 to 2337 (GAAT…SKVK). Phosphoserine occurs at positions 2058 and 2059. Lysine 2074 participates in a covalent cross-link: Glycyl lysine isopeptide (Lys-Gly) (interchain with G-Cter in SUMO2). Serine 2075 and serine 2079 each carry phosphoserine. Residues 2094–2104 (SGGKCETDRRM) show a composition bias toward basic and acidic residues. The span at 2141–2193 (SSCSSRSSSSSSSSSCSHSRSGSSSSSSSSCSSASSSSSSSTSSSSSSSSSSS) shows a compositional bias: low complexity. Over residues 2203–2216 (AQKRESTTHMKAYD) the composition is skewed to basic and acidic residues. The segment covering 2221 to 2238 (ASLSTTQDETQDSFQMNN) has biased composition (polar residues). Positions 2332 to 2481 (QMSKVKKHVR…LSYTQPQGIP (150 aa)) are binds A/T-rich DNA. Residues lysine 2350, lysine 2356, and lysine 2361 each participate in a glycyl lysine isopeptide (Lys-Gly) (interchain with G-Cter in SUMO2) cross-link. An a.T hook-like region spans residues 2429-2436 (KKRRGRRK). The LXXLL motif 4 motif lies at 2721-2725 (LPNLL). Residues 2729 to 2777 (GLLTKPTESGTEDKKGSDSKESEGKTERTESQSSENGGENSVSSSPSTS) are disordered. The span at 2739 to 2758 (TEDKKGSDSKESEGKTERTE) shows a compositional bias: basic and acidic residues. The segment covering 2759 to 2777 (SQSSENGGENSVSSSPSTS) has biased composition (low complexity). Positions 2793 to 2797 (LNPLL) match the LXXLL motif 5 motif. Residues 2827–2897 (VQNKNSDLGS…SEDSDSSNED (71 aa)) form a disordered region. A compositionally biased stretch (basic and acidic residues) spans 2840–2857 (VEVKEEDSRIKDQEDKGG). Residue lysine 2843 forms a Glycyl lysine isopeptide (Lys-Gly) (interchain with G-Cter in SUMO2) linkage. The segment covering 2877-2888 (ASSGSDSTSSSS) has biased composition (low complexity).

It belongs to the SNF2/RAD54 helicase family. As to quaternary structure, interacts with PPARA. Probably interacts with ESR1 and NR1I3. In terms of processing, phosphorylated on serine and tyrosine residues. Widely expressed at low levels. In bone marrow, expression is restricted to osteoprogenitor cells adjacent to mature osteoblasts.

The protein localises to the cytoplasm. It is found in the nucleus. The enzyme catalyses ATP + H2O = ADP + phosphate + H(+). Probable ATP-dependent chromatin-remodeling factor. Acts as a transcriptional coactivator for PPARA and possibly other nuclear receptors. Has DNA-dependent ATPase activity and binds to A/T-rich DNA. Associates with A/T-rich regulatory regions in promoters of genes that participate in the differentiation of progenitors during osteogenesis. This is Chromodomain-helicase-DNA-binding protein 9 (CHD9) from Homo sapiens (Human).